We begin with the raw amino-acid sequence, 313 residues long: Dimethyladenosine transferase (313 aa).

The disordered stretch occupies residues 1 to 21; that stretch reads MPKVKSGAIGRRRGRQEQRRE. Residues histidine 37, leucine 39, glycine 64, glutamate 85, aspartate 113, and asparagine 128 each contribute to the S-adenosyl-L-methionine site.

This sequence belongs to the class I-like SAM-binding methyltransferase superfamily. rRNA adenine N(6)-methyltransferase family. Part of the small subunit (SSU) processome, composed of more than 70 proteins and the RNA chaperone small nucleolar RNA (snoRNA) U3.

It is found in the nucleus. Its subcellular location is the nucleoplasm. It localises to the nucleolus. The enzyme catalyses adenosine(1779)/adenosine(1780) in 18S rRNA + 4 S-adenosyl-L-methionine = N(6)-dimethyladenosine(1779)/N(6)-dimethyladenosine(1780) in 18S rRNA + 4 S-adenosyl-L-homocysteine + 4 H(+). Its function is as follows. Specifically dimethylates two adjacent adenosines in the loop of a conserved hairpin near the 3'-end of 18S rRNA in the 40S particle. Involved in the pre-rRNA processing steps leading to small-subunit rRNA production independently of its RNA-modifying catalytic activity. Part of the small subunit (SSU) processome, first precursor of the small eukaryotic ribosomal subunit. During the assembly of the SSU processome in the nucleolus, many ribosome biogenesis factors, an RNA chaperone and ribosomal proteins associate with the nascent pre-rRNA and work in concert to generate RNA folding, modifications, rearrangements and cleavage as well as targeted degradation of pre-ribosomal RNA by the RNA exosome. The polypeptide is Dimethyladenosine transferase (DIMT1) (Macaca fascicularis (Crab-eating macaque)).